Here is a 355-residue protein sequence, read N- to C-terminus: C-X-C chemokine receptor type 1 (355 aa).

At 1 to 40 (MEVNVWNMTDLWTWFEDEFANATGMPPVEKDYSPCLVVTQ) the chain is on the extracellular side. Residues asparagine 7 and asparagine 21 are each glycosylated (N-linked (GlcNAc...) asparagine). Residues 41-67 (TLNKYVVVVIYALVFLLSLLGNSLVML) form a helical membrane-spanning segment. The Cytoplasmic portion of the chain corresponds to 68-73 (VILYSR). Residues 74–92 (SNRSVTDVYLLNLAMADLL) form a helical membrane-spanning segment. The Extracellular portion of the chain corresponds to 93 to 114 (FALTMPIWAVSKEKGWIFGTPL). A helical membrane pass occupies residues 115 to 138 (CKVVSLVKEVNFYSGILLLACISV). Cysteines 115 and 192 form a disulfide. The Cytoplasmic portion of the chain corresponds to 139–159 (DRYLAIVHATRTLTQKRHLVK). The chain crosses the membrane as a helical span at residues 160-184 (FICLGIWALSLILSLPFFLFRQVFS). Over 185–204 (PNNSSPVCYEDLGHNTAKWR) the chain is Extracellular. A helical transmembrane segment spans residues 205-232 (MVLRILPHTFGFILPLLVMLFCYGFTLR). Residues 233 to 247 (TLFQAHMGQKHRAMR) lie on the Cytoplasmic side of the membrane. Residues 248–270 (VIFAVVLIFLLCWLPYNLVLLAD) traverse the membrane as a helical segment. The Extracellular portion of the chain corresponds to 271–290 (TLMRTHVIQETCQRRNDIDR). Residues 291–313 (ALDATEILGFLHSCLNPIIYAFI) form a helical membrane-spanning segment. Residues 314–355 (GQNFRNGFLKMLAARGLISKEFLTRHRVTSYTSSSTNVPSNL) are Cytoplasmic-facing.

It belongs to the G-protein coupled receptor 1 family. In terms of assembly, interacts with IL8. Interacts with GNAI2. In terms of tissue distribution, neutrophils.

Its subcellular location is the cell membrane. Receptor to interleukin-8, which is a powerful neutrophils chemotactic factor. Binding of IL-8 to the receptor causes activation of neutrophils. This response is mediated via a G-protein that activates a phosphatidylinositol-calcium second messenger system. The chain is C-X-C chemokine receptor type 1 (CXCR1) from Oryctolagus cuniculus (Rabbit).